The following is a 617-amino-acid chain: Secretogranin-2 (617 aa).

A signal peptide spans 1–27 (MAEAKTHWLGAALSLIPLIFLISGAEA). Residues 28-30 (ASF) constitute a propeptide that is removed on maturation. Residues 120-143 (QAENEPQSAPKENKPYALNSEKNF) are disordered. A Sulfotyrosine modification is found at Tyr151. Phosphoserine is present on Ser174. The O-glycosylated at one site stretch occupies residues 182–200 (TNEIVEEQYTPQSLATLES). Composition is skewed to basic and acidic residues over residues 257–284 (IESQTQEEVRDSKENIEKNEQINDEMKR) and 293–302 (EDLRKESKDQ). Residues 257 to 302 (IESQTQEEVRDSKENIEKNEQINDEMKRSGQLGIQEEDLRKESKDQ) are disordered. Residue Ser268 is modified to Phosphoserine. Phosphoserine is present on residues Ser432, Ser532, Ser555, and Ser556. The segment at 552-583 (NQGSSQETDKLAPVSKRFPVGPPKNDDTPNRQ) is disordered.

It belongs to the chromogranin/secretogranin protein family. In terms of assembly, interacts with Secretogranin III/SCG3. In terms of processing, O-glycosylated.

The protein resides in the secreted. Functionally, neuroendocrine protein of the granin family that regulates the biogenesis of secretory granules. In Homo sapiens (Human), this protein is Secretogranin-2 (SCG2).